Here is a 685-residue protein sequence, read N- to C-terminus: Mannan-binding lectin serine protease 2 (685 aa).

A signal peptide spans 1–19; that stretch reads MRLLIFLGLLWSLVATLLG. The 118-residue stretch at 20–137 folds into the CUB 1 domain; it reads SKWPEPVFGR…TGFEAFYAAE (118 aa). Ca(2+)-binding residues include E67 and D75. C72 and C90 are disulfide-bonded. N103 carries N-linked (GlcNAc...) asparagine glycosylation. D120, S122, N123, D138, and E141 together coordinate Ca(2+). Residues 138–181 form the EGF-like; calcium-binding domain; sequence DVDECRVSLGDSVPCDHYCHNYLGGYYCSCRAGYVLHQNKHTCS. Cystine bridges form between C142-C156, C152-C165, C167-C180, C184-C211, and C241-C259. Ca(2+) contacts are provided by N158 and G162. N158 bears the (3R)-3-hydroxyasparagine mark. The 113-residue stretch at 184–296 folds into the CUB 2 domain; sequence CSGQVFTGRS…TGWKIHYTST (113 aa). N285 and N308 each carry an N-linked (GlcNAc...) asparagine glycan. Sushi domains follow at residues 298 to 363 and 364 to 431; these read RPCP…ECSI and IDCG…VCEP. Disulfide bonds link C300–C348, C328–C361, C366–C411, C396–C429, C433–C552, C598–C617, and C628–C659. The Peptidase S1 domain maps to 444-683; sequence IVGGQPAKPG…YIPWIENIIS (240 aa). Catalysis depends on charge relay system residues H483 and D532. N545 carries N-linked (GlcNAc...) asparagine glycosylation. The active-site Charge relay system is the S632. N641 is a glycosylation site (N-linked (GlcNAc...) asparagine).

The protein belongs to the peptidase S1 family. In terms of assembly, homodimer; disulfide-linked. Binds MBL2. Isoform 2 binds to MASP1. Binds SERPING1. The iron and 2-oxoglutarate dependent 3-hydroxylation of aspartate and asparagine is (R) stereospecific within EGF domains. As to expression, plasma.

It is found in the secreted. The catalysed reaction is Selective cleavage after Arg-223 in complement component C2 (-Ser-Leu-Gly-Arg-|-Lys-Ile-Gln-Ile) and after Arg-76 in complement component C4 (-Gly-Leu-Gln-Arg-|-Ala-Leu-Glu-Ile).. Serum protease that plays an important role in the activation of the complement system via mannose-binding lectin. After activation by auto-catalytic cleavage it cleaves C2 and C4, leading to their activation and to the formation of C3 convertase. The polypeptide is Mannan-binding lectin serine protease 2 (Masp2) (Mus musculus (Mouse)).